The following is a 426-amino-acid chain: Histidine--tRNA ligase (426 aa).

The protein belongs to the class-II aminoacyl-tRNA synthetase family. In terms of assembly, homodimer.

The protein localises to the cytoplasm. It carries out the reaction tRNA(His) + L-histidine + ATP = L-histidyl-tRNA(His) + AMP + diphosphate + H(+). This Streptococcus dysgalactiae subsp. equisimilis (Streptococcus equisimilis) protein is Histidine--tRNA ligase (hisS).